We begin with the raw amino-acid sequence, 383 residues long: S-adenosylmethionine synthase 1 (383 aa).

His-15 lines the ATP pocket. Asp-17 contacts Mg(2+). Glu-43 contributes to the K(+) binding site. Residues Glu-56 and Gln-99 each contribute to the L-methionine site. The segment at 99 to 109 is flexible loop; it reads QSPDIDLGVSR. Residues 162–164, 228–229, Asp-237, 243–244, Ala-260, and Lys-264 each bind ATP; these read DGK, RF, and RK. Residue Asp-237 participates in L-methionine binding. Residue Lys-268 coordinates L-methionine.

Belongs to the AdoMet synthase family. Homotetramer; dimer of dimers. It depends on Mg(2+) as a cofactor. The cofactor is K(+).

It localises to the cytoplasm. The catalysed reaction is L-methionine + ATP + H2O = S-adenosyl-L-methionine + phosphate + diphosphate. Its pathway is amino-acid biosynthesis; S-adenosyl-L-methionine biosynthesis; S-adenosyl-L-methionine from L-methionine: step 1/1. Catalyzes the formation of S-adenosylmethionine (AdoMet) from methionine and ATP. The overall synthetic reaction is composed of two sequential steps, AdoMet formation and the subsequent tripolyphosphate hydrolysis which occurs prior to release of AdoMet from the enzyme. In Rhodospirillum rubrum (strain ATCC 11170 / ATH 1.1.1 / DSM 467 / LMG 4362 / NCIMB 8255 / S1), this protein is S-adenosylmethionine synthase 1.